Here is a 468-residue protein sequence, read N- to C-terminus: MQRVHAFGDDALGDLDAVGLADAIRAGWVSRADVIEAAIVRTEAVNPALGGLAYEAFQWARQTASKAGSGFFSGVPTFIKDNIDVAGQPTMRGSDAWVPRNAFDDGEFTRLYLATGPVSLGKTQLSEFGFSASAEHMRLGPVRNPWDTDYTAGASSSGSGAFVAAGVVPMAHANDGGGSIRIPASCNGLVGLKPSRGRLPLDSELRRLPVGIVVNGVLTRSVRDTAAFYREAERIWHNPKLPPVGDVTQPGRQRLRIAVVTRSVQRECSPELRELTLKSARLLEELGHRVERVAEPPVPPNFPDDFLLYWGLLAAMQVRTGRLAFGNTFDRTKLDSLTLGLDRHASRNMHRLPKAIMRLRRLRRRTADFFATYDVLLTPTVADETPRIGYLTPTDYQQVMDRLMGWVAFTPLQNVTGEPAISLPLAQSADGMPVGMMFTADFGQEAQLLELAFELEEARPWARIQIGD.

Active-site charge relay system residues include lysine 80 and serine 155. Serine 179 (acyl-ester intermediate) is an active-site residue.

It belongs to the amidase family.

It carries out the reaction a monocarboxylic acid amide + H2O = a monocarboxylate + NH4(+). The chain is Putative amidase AmiC (amiC) from Mycobacterium leprae (strain TN).